A 299-amino-acid polypeptide reads, in one-letter code: Protease HtpX homolog (299 aa).

The next 2 helical transmembrane spans lie at 19–39 (LFIV…VWYF) and 41–61 (WGIT…WIAY). H146 contributes to the Zn(2+) binding site. E147 is a catalytic residue. H150 is a binding site for Zn(2+). The next 2 membrane-spanning stretches (helical) occupy residues 156–176 (ILLM…RDVF) and 198–218 (IILL…VLII). E227 contacts Zn(2+).

It belongs to the peptidase M48B family. Requires Zn(2+) as cofactor.

It localises to the cell membrane. In Caldanaerobacter subterraneus subsp. tengcongensis (strain DSM 15242 / JCM 11007 / NBRC 100824 / MB4) (Thermoanaerobacter tengcongensis), this protein is Protease HtpX homolog.